Here is a 578-residue protein sequence, read N- to C-terminus: Forkhead box protein P1 (578 aa).

The segment at 208-233 (GVCKWPGCETICEDFPSFLKHLNSEH) adopts a C2H2-type zinc-finger fold. Residues 250-271 (VQQLELQLSKDKERLQAMMSHL) are leucine-zipper. Residues 284–288 (PLNLV) form a ctbp1-binding region. The span at 293-305 (LSKTASEASPQSL) shows a compositional bias: polar residues. The segment at 293–325 (LSKTASEASPQSLPHTPTTPTAPLTPITQGPSV) is disordered. The segment covering 306 to 320 (PHTPTTPTAPLTPIT) has biased composition (low complexity). The fork-head DNA-binding region spans 366–456 (RPPFTYASLI…PQKISGSPTL (91 aa)). The disordered stretch occupies residues 511–578 (MEHTSSNGSD…EDDPVNDDME (68 aa)). Over residues 515–527 (SSNGSDSSPGRSP) the composition is skewed to low complexity. A compositionally biased stretch (acidic residues) spans 568 to 578 (YEDDPVNDDME).

In terms of assembly, dimerization is required for DNA-binding. Isoform a, but not isoform b, interacts with ctbp1. As to expression, all isoforms show similar spatial expression. Localized to the animal hemisphere of early cleavage stage embryos. At tailbud stages, expressed in regions of the brain, eye and the splanchnic mesodermal layer of the lateral plate mesoderm surrounding the gut. At stage 35, expressed within the lens of the eye, in distinct regions of the head mesenchyme and in the area anterior to the gut. In the brain the anterior-most expression is restricted to the outer region of the mesencephalon. With ongoing development, additional expression is found in the curling gut.

Its subcellular location is the nucleus. Its function is as follows. Transcriptional repressor. The polypeptide is Forkhead box protein P1 (Xenopus laevis (African clawed frog)).